Reading from the N-terminus, the 173-residue chain is Succinate dehydrogenase assembly factor 3, mitochondrial (173 aa).

The transit peptide at 1–59 (MFRPSTSLALRSTLRQLASASNQPIPPGSEINAVKRTVATILPPIRLYRRIIRAHRRLD) directs the protein to the mitochondrion. The interval 149–173 (FPPEKQRELAEKAAADAGLSVKKDE) is disordered. A compositionally biased stretch (basic and acidic residues) spans 152 to 162 (EKQRELAEKAA).

Belongs to the complex I LYR family. SDHAF3 subfamily. In terms of assembly, interacts with the iron-sulfur protein subunit within the SDH catalytic dimer.

The protein localises to the mitochondrion matrix. Its function is as follows. Plays an essential role in the assembly of succinate dehydrogenase (SDH), an enzyme complex (also referred to as respiratory complex II) that is a component of both the tricarboxylic acid (TCA) cycle and the mitochondrial electron transport chain, and which couples the oxidation of succinate to fumarate with the reduction of ubiquinone (coenzyme Q) to ubiquinol. Promotes maturation of the iron-sulfur protein subunit of the SDH catalytic dimer, protecting it from the deleterious effects of oxidants. May act together with SDHAF1. This Mycosarcoma maydis (Corn smut fungus) protein is Succinate dehydrogenase assembly factor 3, mitochondrial.